A 396-amino-acid chain; its full sequence is Elongation factor Tu (396 aa).

Residues 10–206 enclose the tr-type G domain; the sequence is KPHINVGTIG…QMDAYIPEPQ (197 aa). A G1 region spans residues 19–26; that stretch reads GHVDHGKT. Residue 19–26 participates in GTP binding; that stretch reads GHVDHGKT. Mg(2+) is bound at residue threonine 26. The tract at residues 60–64 is G2; it reads GITIA. Residues 81-84 form a G3 region; the sequence is DCPG. GTP contacts are provided by residues 81–85 and 136–139; these read DCPGH and NKAD. The tract at residues 136–139 is G4; the sequence is NKAD. Residues 174–176 form a G5 region; sequence SAL.

It belongs to the TRAFAC class translation factor GTPase superfamily. Classic translation factor GTPase family. EF-Tu/EF-1A subfamily. Monomer.

It is found in the cytoplasm. The catalysed reaction is GTP + H2O = GDP + phosphate + H(+). Functionally, GTP hydrolase that promotes the GTP-dependent binding of aminoacyl-tRNA to the A-site of ribosomes during protein biosynthesis. This chain is Elongation factor Tu, found in Nitrosococcus oceani (strain ATCC 19707 / BCRC 17464 / JCM 30415 / NCIMB 11848 / C-107).